The chain runs to 387 residues: Mannitol-1-phosphate 5-dehydrogenase (387 aa).

3 to 14 serves as a coordination point for NAD(+); it reads ALHFGAGNIGRG.

It belongs to the mannitol dehydrogenase family.

The catalysed reaction is D-mannitol 1-phosphate + NAD(+) = beta-D-fructose 6-phosphate + NADH + H(+). The sequence is that of Mannitol-1-phosphate 5-dehydrogenase from Yersinia pestis bv. Antiqua (strain Antiqua).